The chain runs to 1418 residues: Chromatin remodeling factor mit1 (1418 aa).

The segment covering 135 to 148 (DETASDSATSSSSD) has biased composition (low complexity). A disordered region spans residues 135–156 (DETASDSATSSSSDTNKKVNRK). Residues 212–271 (VCVCVKCHGREHRSSGKNFVYCDHCSNVYHYDCSPLPSLNKETRNYSQQNGFICPLCSKN) form a PHD-type zinc finger. The RING-type; atypical zinc-finger motif lies at 215-269 (CVKCHGREHRSSGKNFVYCDHCSNVYHYDCSPLPSLNKETRNYSQQNGFICPLCS). Residues 568 to 738 (YLRWYTHHPC…FNLLQFLNPM (171 aa)) form the Helicase ATP-binding domain. An ATP-binding site is contributed by 581-588 (DEMGLGKT). In terms of domain architecture, Helicase C-terminal spans 875–1034 (ILRLLVPKLI…QNHNSEKDLE (160 aa)).

The protein belongs to the SNF2/RAD54 helicase family. As to quaternary structure, interacts with clr3.

The protein resides in the nucleus. Its subcellular location is the chromosome. It localises to the centromere. It is found in the telomere. Functionally, required for proper positioning of nucleosomes at heterochromatic loci and for transcriptional gene silencing (TGS) function of the Snf2/Hdac-containing repressor complex (SHREC). This is Chromatin remodeling factor mit1 (mit1) from Schizosaccharomyces pombe (strain 972 / ATCC 24843) (Fission yeast).